Here is a 1022-residue protein sequence, read N- to C-terminus: Protein translocase subunit SECA1, chloroplastic (1022 aa).

The N-terminal 72 residues, 1–72 (MVSPLCDSQL…SRKRSTSVNA (72 aa)), are a transit peptide targeting the chloroplast. The residue at position 73 (Ser73) is an N-acetylserine. Residue 176-183 (MRTGEGKT) coordinates ATP. The segment at 985–1022 (KDEEKKSQNGKPSKQVDNASEKPKQVGVTDEPSSIASA) is disordered. Residues 993–1002 (NGKPSKQVDN) are compositionally biased toward polar residues.

Belongs to the SecA family. In terms of assembly, part of the Sec protein translocation apparatus. Interacts probably with SCY1. Expressed in green tissues, including cotyledons, rosette and cauline leaves, and sepals. Also detected at the base and the tip of the trichome.

The protein resides in the plastid. The protein localises to the chloroplast stroma. Its subcellular location is the chloroplast thylakoid membrane. It catalyses the reaction ATP + H2O + chloroplast-proteinSide 1 = ADP + phosphate + chloroplast-proteinSide 2.. Its function is as follows. Has a central role in coupling the hydrolysis of ATP to the transfer of proteins across the thylakoid membrane. Involved in photosynthetic acclimation and required for chloroplast biogenesis. This Arabidopsis thaliana (Mouse-ear cress) protein is Protein translocase subunit SECA1, chloroplastic.